Consider the following 192-residue polypeptide: MTEPVLRGLPSSPRPFGGYFDQVADTLAVAYPRLPDAIERTDVDRGELTFHVRREYLRELALVLRDDERLRFELLNSLSGVHYPTDVGRELHVVYELTSMTYRRHIRLEVAAPDADPHIPSVVDVWPTADFQERETWDMFGVIFDGHPALTRILMPDDWPGHPQRKDYPLGGIPVEYKGATVPPPDERRQYA.

Residues 170–192 (LGGIPVEYKGATVPPPDERRQYA) form a disordered region.

It belongs to the complex I 30 kDa subunit family. As to quaternary structure, NDH-1 is composed of 14 different subunits. Subunits NuoB, C, D, E, F, and G constitute the peripheral sector of the complex.

Its subcellular location is the cell membrane. The enzyme catalyses a quinone + NADH + 5 H(+)(in) = a quinol + NAD(+) + 4 H(+)(out). Functionally, NDH-1 shuttles electrons from NADH, via FMN and iron-sulfur (Fe-S) centers, to quinones in the respiratory chain. The immediate electron acceptor for the enzyme in this species is believed to be a menaquinone. Couples the redox reaction to proton translocation (for every two electrons transferred, four hydrogen ions are translocated across the cytoplasmic membrane), and thus conserves the redox energy in a proton gradient. This chain is NADH-quinone oxidoreductase subunit C, found in Acidothermus cellulolyticus (strain ATCC 43068 / DSM 8971 / 11B).